Reading from the N-terminus, the 756-residue chain is Xylosyl- and glucuronyltransferase LARGE1 (756 aa).

At 1–10 the chain is on the cytoplasmic side; that stretch reads MLGICRGRRK. A helical; Signal-anchor for type II membrane protein transmembrane segment spans residues 11–31; that stretch reads FLAASLTVLFVPAVTWIYLFA. Over 32–756 the chain is Lumenal; that stretch reads GSFEDGKPVS…LKYLTAENNS (725 aa). Disordered stretches follow at residues 42 to 63 and 81 to 109; these read LSPL…RDRE and KQLS…EGTG. Residues 44-58 show a composition bias toward polar residues; it reads PLESQPHSPRYTASS. Residues 55–90 adopt a coiled-coil conformation; the sequence is TASSQRDRESLEVRMREVEEENRVLRKQLSLAQGRS. 3 N-linked (GlcNAc...) asparagine glycosylation sites follow: N97, N122, and N148. Positions 138–413 are xylosyltransferase activity; that stretch reads IHVAIVCAGY…FLEYDGNLLR (276 aa). D242 and D244 together coordinate Mn(2+). The N-linked (GlcNAc...) asparagine glycan is linked to N272. The interval 414–756 is glucuronyltransferase activity; it reads RELFGCPSEA…LKYLTAENNS (343 aa). Positions 563 and 565 each coordinate Mn(2+).

In the C-terminal section; belongs to the glycosyltransferase 49 family. It in the N-terminal section; belongs to the glycosyltransferase 8 family. The cofactor is Mn(2+).

It localises to the golgi apparatus membrane. The catalysed reaction is 3-O-[beta-D-GlcA-(1-&gt;3)-beta-D-Xyl-(1-&gt;4)-Rib-ol-P-Rib-ol-P-3-beta-D-GalNAc-(1-&gt;3)-beta-D-GlcNAc-(1-&gt;4)-(O-6-P-alpha-D-Man)]-Thr-[protein] + UDP-alpha-D-xylose = 3-O-[alpha-D-Xyl-(1-&gt;3)-beta-D-GlcA-(1-&gt;4)-beta-D-Xyl-(1-&gt;4)-Rib-ol-P-Rib-ol-P-3-beta-D-GalNAc-(1-&gt;3)-beta-D-GlcNAc-(1-&gt;4)-(O-6-P-alpha-D-Man)]-Thr-[protein] + UDP + H(+). The enzyme catalyses 3-O-{(1-&gt;[3)-alpha-D-Xyl-(1-&gt;3)-beta-D-GlcA-(1-&gt;](n)-4)-beta-D-Xyl-(1-&gt;4)-Rib-ol-P-Rib-ol-P-3-beta-D-GalNAc-(1-&gt;3)-beta-D-GlcNAc-(1-&gt;4)-O-6-P-alpha-D-Man}-L-Thr-[protein] + UDP-alpha-D-glucuronate = 3-O-{beta-D-GlcA-(1-&gt;[3)-alpha-D-Xyl-(1-&gt;3)-beta-D-GlcA-(1-&gt;](n)-4)-beta-D-Xyl-(1-&gt;4)-Rib-ol-P-Rib-ol-P-3-beta-D-GalNAc-(1-&gt;3)-beta-D-GlcNAc-(1-&gt;4)-O-6-P-alpha-D-Man}-L-Thr-[protein] + UDP + H(+). It carries out the reaction 3-O-{beta-D-GlcA-(1-&gt;[3)-alpha-D-Xyl-(1-&gt;3)-beta-D-GlcA-(1-&gt;](n)-4)-beta-D-Xyl-(1-&gt;4)-Rib-ol-P-Rib-ol-P-3-beta-D-GalNAc-(1-&gt;3)-beta-D-GlcNAc-(1-&gt;4)-O-6-P-alpha-D-Man}-L-Thr-[protein] + UDP-alpha-D-xylose = 3-O-{(1-&gt;[3)-alpha-D-Xyl-(1-&gt;3)-beta-D-GlcA-(1-&gt;](n+1)-4)-beta-D-Xyl-(1-&gt;4)-Rib-ol-P-Rib-ol-P-3-beta-D-GalNAc-(1-&gt;3)-beta-D-GlcNAc-(1-&gt;4)-O-6-P-alpha-D-Man}-L-Thr-[protein] + UDP + H(+). It functions in the pathway protein modification; protein glycosylation. Its function is as follows. Bifunctional glycosyltransferase with both alpha-1,3-xylosyltransferase and beta-1,3-glucuronyltransferase activities involved in the maturation of alpha-dystroglycan (DAG1) by glycosylation leading to DAG1 binding to laminin G-like domain-containing extracellular proteins with high affinity. Elongates the glucuronyl-beta-1,4-xylose-beta disaccharide primer structure initiated by B4GAT1 by adding repeating units [-3-Xylose-alpha-1,3-GlcA-beta-1-] to produce a heteropolysaccharide. Requires the phosphorylation of core M3 (O-mannosyl trisaccharide) by POMK to elongate the glucuronyl-beta-1,4-xylose-beta disaccharide primer. Plays a key role in skeletal muscle function and regeneration. In Gallus gallus (Chicken), this protein is Xylosyl- and glucuronyltransferase LARGE1.